Here is a 393-residue protein sequence, read N- to C-terminus: Branched-chain amino acid aminotransferase 1, mitochondrial (393 aa).

The N-terminal 34 residues, 1-34 (MIHRGLWLHNLVQSYRVGSSSSSSTLFKLVYRYN), are a transit peptide targeting the mitochondrion. Pyridoxal 5'-phosphate is bound at residue Arg138. Lys240 functions as the Proton acceptor in the catalytic mechanism. Lys240 carries the post-translational modification N6-(pyridoxal phosphate)lysine. Glu276 serves as a coordination point for pyridoxal 5'-phosphate.

Belongs to the class-IV pyridoxal-phosphate-dependent aminotransferase family. The cofactor is pyridoxal 5'-phosphate. In terms of tissue distribution, expressed specifically in lupulin glands.

The protein localises to the mitochondrion. The enzyme catalyses L-isoleucine + 2-oxoglutarate = (S)-3-methyl-2-oxopentanoate + L-glutamate. It carries out the reaction L-leucine + 2-oxoglutarate = 4-methyl-2-oxopentanoate + L-glutamate. It catalyses the reaction L-valine + 2-oxoglutarate = 3-methyl-2-oxobutanoate + L-glutamate. Its pathway is amino-acid biosynthesis; L-isoleucine biosynthesis; L-isoleucine from 2-oxobutanoate: step 4/4. It participates in amino-acid biosynthesis; L-leucine biosynthesis; L-leucine from 3-methyl-2-oxobutanoate: step 4/4. The protein operates within amino-acid biosynthesis; L-valine biosynthesis; L-valine from pyruvate: step 4/4. Functionally, converts 2-oxo acids to branched-chain amino acids (BCAA). Shows no kinetic preferences corresponding to anabolic or catabolic functions, but likely involved in BCAA catabolism. This Humulus lupulus (European hop) protein is Branched-chain amino acid aminotransferase 1, mitochondrial.